The following is a 303-amino-acid chain: Putative S-adenosyl-L-methionine-dependent methyltransferase MSMEG_1479/MSMEI_1443 (303 aa).

Residues aspartate 130 and 159 to 160 each bind S-adenosyl-L-methionine; that span reads DL.

It belongs to the UPF0677 family.

Its function is as follows. Exhibits S-adenosyl-L-methionine-dependent methyltransferase activity. This chain is Putative S-adenosyl-L-methionine-dependent methyltransferase MSMEG_1479/MSMEI_1443, found in Mycolicibacterium smegmatis (strain ATCC 700084 / mc(2)155) (Mycobacterium smegmatis).